Consider the following 85-residue polypeptide: Putative defensin-like protein 79 (85 aa).

An N-terminal signal peptide occupies residues 1-31 (MKSEKSADAYGTYFLLISTIFLLFIARQASS). 4 disulfides stabilise this stretch: C37/C69, C44/C60, C47/C67, and C51/C68.

It belongs to the DEFL family.

Its subcellular location is the secreted. The polypeptide is Putative defensin-like protein 79 (Arabidopsis thaliana (Mouse-ear cress)).